We begin with the raw amino-acid sequence, 319 residues long: Ornithine carbamoyltransferase (319 aa).

Carbamoyl phosphate-binding positions include 55-58 (STRT), Q82, R106, and 133-136 (HPCQ). Residues N171, D234, and 238–239 (SM) contribute to the L-ornithine site. Carbamoyl phosphate-binding positions include 274–275 (CL) and R302.

This sequence belongs to the aspartate/ornithine carbamoyltransferase superfamily. OTCase family.

The protein resides in the cytoplasm. The catalysed reaction is carbamoyl phosphate + L-ornithine = L-citrulline + phosphate + H(+). The protein operates within amino-acid biosynthesis; L-arginine biosynthesis; L-arginine from L-ornithine and carbamoyl phosphate: step 1/3. In terms of biological role, reversibly catalyzes the transfer of the carbamoyl group from carbamoyl phosphate (CP) to the N(epsilon) atom of ornithine (ORN) to produce L-citrulline. The polypeptide is Ornithine carbamoyltransferase (Corynebacterium diphtheriae (strain ATCC 700971 / NCTC 13129 / Biotype gravis)).